The following is a 132-amino-acid chain: Small ribosomal subunit protein uS11 (132 aa).

The protein belongs to the universal ribosomal protein uS11 family. Part of the 30S ribosomal subunit. Interacts with proteins S7 and S18. Binds to IF-3.

Located on the platform of the 30S subunit, it bridges several disparate RNA helices of the 16S rRNA. Forms part of the Shine-Dalgarno cleft in the 70S ribosome. This Chlamydia trachomatis serovar L2 (strain ATCC VR-902B / DSM 19102 / 434/Bu) protein is Small ribosomal subunit protein uS11.